The chain runs to 262 residues: Type III pantothenate kinase (262 aa).

12 to 19 (DIGNTSIA) contacts ATP. Substrate is bound by residues Tyr94 and 109–112 (GSDV). Residue Asp111 is the Proton acceptor of the active site. Asp132 serves as a coordination point for K(+). Thr135 provides a ligand contact to ATP. Thr187 is a binding site for substrate.

The protein belongs to the type III pantothenate kinase family. In terms of assembly, homodimer. NH4(+) serves as cofactor. K(+) is required as a cofactor.

It localises to the cytoplasm. The enzyme catalyses (R)-pantothenate + ATP = (R)-4'-phosphopantothenate + ADP + H(+). It functions in the pathway cofactor biosynthesis; coenzyme A biosynthesis; CoA from (R)-pantothenate: step 1/5. In terms of biological role, catalyzes the phosphorylation of pantothenate (Pan), the first step in CoA biosynthesis. The polypeptide is Type III pantothenate kinase (Borrelia garinii subsp. bavariensis (strain ATCC BAA-2496 / DSM 23469 / PBi) (Borreliella bavariensis)).